A 196-amino-acid polypeptide reads, in one-letter code: ATP-dependent Clp protease proteolytic subunit (196 aa).

Catalysis depends on serine 101, which acts as the Nucleophile. Histidine 126 is a catalytic residue.

It belongs to the peptidase S14 family. Component of the chloroplastic Clp protease core complex.

It localises to the plastid. It is found in the chloroplast stroma. It catalyses the reaction Hydrolysis of proteins to small peptides in the presence of ATP and magnesium. alpha-casein is the usual test substrate. In the absence of ATP, only oligopeptides shorter than five residues are hydrolyzed (such as succinyl-Leu-Tyr-|-NHMec, and Leu-Tyr-Leu-|-Tyr-Trp, in which cleavage of the -Tyr-|-Leu- and -Tyr-|-Trp bonds also occurs).. Its function is as follows. Cleaves peptides in various proteins in a process that requires ATP hydrolysis. Has a chymotrypsin-like activity. Plays a major role in the degradation of misfolded proteins. This chain is ATP-dependent Clp protease proteolytic subunit, found in Gossypium hirsutum (Upland cotton).